Reading from the N-terminus, the 263-residue chain is N-acyl homoserine lactonase AttM (263 aa).

His103, His105, Asp107, His108, His180, Asp202, and His247 together coordinate Zn(2+).

The protein belongs to the metallo-beta-lactamase superfamily. Zn(2+) serves as cofactor.

The catalysed reaction is an N-acyl-L-homoserine lactone + H2O = an N-acyl-L-homoserine + H(+). This is N-acyl homoserine lactonase AttM (attM) from Rhizobium radiobacter (Agrobacterium tumefaciens).